We begin with the raw amino-acid sequence, 535 residues long: ATP-dependent RNA helicase DBP3 (535 aa).

The segment covering 1–21 has biased composition (basic and acidic residues); the sequence is MGSSSKSEKRKYDDGEELLER. The tract at residues 1–96 is disordered; sequence MGSSSKSEKR…TSYGYVQSSK (96 aa). Basic residues predominate over residues 35 to 54; the sequence is KKDKKEKKDKKEKKDKKEKK. A compositionally biased stretch (basic and acidic residues) spans 55 to 72; that stretch reads DKKEKNKESKEAEARDDS. Residues 79 to 88 show a composition bias toward low complexity; sequence SSSSSTESTS. A Q motif motif is present at residues 128-154; the sequence is LSFDQIKLQKDVSSKLTKFPKPTPIQS. The 173-residue stretch at 157–329 folds into the Helicase ATP-binding domain; that stretch reads WPFLLDGKDV…NNFMNQPVKV (173 aa). 170 to 177 provides a ligand contact to ATP; it reads AETGSGKT. The short motif at 276–279 is the DEAD box element; sequence DEAD. The region spanning 362 to 508 is the Helicase C-terminal domain; it reads NLLQKYQNTG…PVPEALLKYG (147 aa).

Belongs to the DEAD box helicase family. DDX5/DBP2 subfamily.

The protein localises to the nucleus. It localises to the nucleolus. The enzyme catalyses ATP + H2O = ADP + phosphate + H(+). ATP-dependent RNA helicase required for 60S ribosomal subunit synthesis. Involved in efficient pre-rRNA processing, predominantly at site A3, which is necessary for the normal formation of 25S and 5.8S rRNAs. This is ATP-dependent RNA helicase DBP3 (DBP3) from Lodderomyces elongisporus (strain ATCC 11503 / CBS 2605 / JCM 1781 / NBRC 1676 / NRRL YB-4239) (Yeast).